A 379-amino-acid polypeptide reads, in one-letter code: Succinyl-diaminopimelate desuccinylase (379 aa).

H70 contacts Zn(2+). D72 is a catalytic residue. D103 is a binding site for Zn(2+). E137 serves as the catalytic Proton acceptor. E138, E166, and H352 together coordinate Zn(2+).

This sequence belongs to the peptidase M20A family. DapE subfamily. As to quaternary structure, homodimer. The cofactor is Zn(2+). Co(2+) serves as cofactor.

The enzyme catalyses N-succinyl-(2S,6S)-2,6-diaminopimelate + H2O = (2S,6S)-2,6-diaminopimelate + succinate. It functions in the pathway amino-acid biosynthesis; L-lysine biosynthesis via DAP pathway; LL-2,6-diaminopimelate from (S)-tetrahydrodipicolinate (succinylase route): step 3/3. In terms of biological role, catalyzes the hydrolysis of N-succinyl-L,L-diaminopimelic acid (SDAP), forming succinate and LL-2,6-diaminopimelate (DAP), an intermediate involved in the bacterial biosynthesis of lysine and meso-diaminopimelic acid, an essential component of bacterial cell walls. The protein is Succinyl-diaminopimelate desuccinylase of Paraburkholderia xenovorans (strain LB400).